The primary structure comprises 343 residues: HTH-type transcriptional regulator GntR (343 aa).

Positions 16–70 (PTLNEVARRAGVSPITASRALRGVASVAEELAQKVRDAARELGYVANPAARALAS) constitute an HTH lacI-type domain. A DNA-binding region (H-T-H motif) is located at residues 18-37 (LNEVARRAGVSPITASRALR).

With respect to regulation, free GntR fails to recognize gluconate and 6-phosphogluconate, whereas the GntR/DNA complexes recognize both ligands. It is therefore likely that GntR DNA binding induces structural changes that permit GntR to recognize effectors. Its function is as follows. Involved in the regulation of glucose metabolism. Represses its own expression as well as that of the gluconate permease GntP. It employs an effector mediated de-repression mechanism: in the absence of ligand, GntR binds to the gntR and gntP promoters and represses their expression. The release of promoter bound GntR is induced by gluconate and 6-phosphogluconate that bind with similar apparent affinities to the GntR/DNA complex. The release of GntR leads to transcription of the genes. The sequence is that of HTH-type transcriptional regulator GntR from Pseudomonas aeruginosa (strain ATCC 15692 / DSM 22644 / CIP 104116 / JCM 14847 / LMG 12228 / 1C / PRS 101 / PAO1).